The following is a 147-amino-acid chain: Calcium-regulated heat-stable protein 1 (147 aa).

Residues 1–12 show a composition bias toward pro residues; sequence MSSEPPPPPQPP. The segment at 1 to 52 is disordered; sequence MSSEPPPPPQPPTHQASVGLLDTPRSRERSPSPLRGNVVPSPLPTRRTRTFS. An N-acetylserine modification is found at S2. S30, S32, and S41 each carry phosphoserine. T45 is modified (phosphothreonine). S52 and S58 each carry phosphoserine. Residues 62–129 enclose the CSD domain; sequence VYKGVCKCFC…KLQAVEVVIT (68 aa). Phosphoserine is present on residues S146 and S147.

As to quaternary structure, homodimer. Interacts with STYX. Dephosphorylated by calcineurin in a Ca(2+) dependent manner. Can be phosphorylated by DYRK2 (in vitro).

Its subcellular location is the cytoplasm. It localises to the P-body. The protein resides in the cytoplasmic granule. In terms of biological role, binds mRNA and regulates the stability of target mRNA. Binds single-stranded DNA (in vitro). The polypeptide is Calcium-regulated heat-stable protein 1 (CARHSP1) (Homo sapiens (Human)).